The primary structure comprises 93 residues: Alpha-defensin 26 (93 aa).

The N-terminal stretch at 1–19 is a signal peptide; that stretch reads MKTLVLLSALFLLAFQVQA. A propeptide spanning residues 20–58 is cleaved from the precursor; that stretch reads DPIQNTDEETNTEVQPQEEDQAVSVSFGNPEGSDLQEES. A disordered region spans residues 24–55; sequence NTDEETNTEVQPQEEDQAVSVSFGNPEGSDLQ. Residues 25–40 show a composition bias toward acidic residues; sequence TDEETNTEVQPQEEDQ. Intrachain disulfides connect cysteine 64/cysteine 92, cysteine 66/cysteine 81, and cysteine 71/cysteine 91.

The protein belongs to the alpha-defensin family.

Its subcellular location is the secreted. Its function is as follows. May have microbicidal activities. The sequence is that of Alpha-defensin 26 (Defa26) from Mus musculus (Mouse).